Here is a 148-residue protein sequence, read N- to C-terminus: Deoxyuridine 5'-triphosphate nucleotidohydrolase (148 aa).

Residues 68-70 (RSG), asparagine 81, 85-87 (TID), and lysine 95 each bind substrate.

Belongs to the dUTPase family. It depends on Mg(2+) as a cofactor.

It carries out the reaction dUTP + H2O = dUMP + diphosphate + H(+). Its pathway is pyrimidine metabolism; dUMP biosynthesis; dUMP from dCTP (dUTP route): step 2/2. Its function is as follows. This enzyme is involved in nucleotide metabolism: it produces dUMP, the immediate precursor of thymidine nucleotides and it decreases the intracellular concentration of dUTP so that uracil cannot be incorporated into DNA. The protein is Deoxyuridine 5'-triphosphate nucleotidohydrolase of Thermoanaerobacter sp. (strain X514).